Here is a 349-residue protein sequence, read N- to C-terminus: Protein RecA (349 aa).

64 to 71 contributes to the ATP binding site; the sequence is GPESSGKT.

This sequence belongs to the RecA family.

It localises to the cytoplasm. Can catalyze the hydrolysis of ATP in the presence of single-stranded DNA, the ATP-dependent uptake of single-stranded DNA by duplex DNA, and the ATP-dependent hybridization of homologous single-stranded DNAs. It interacts with LexA causing its activation and leading to its autocatalytic cleavage. The sequence is that of Protein RecA from Rhodopseudomonas palustris (strain ATCC BAA-98 / CGA009).